Reading from the N-terminus, the 295-residue chain is Golgi-associated RAB2 interactor protein 1A (295 aa).

Residues 187-206 form a disordered region; the sequence is MPNSSTETTPESSRPASSQS. Residues 190–206 show a composition bias toward low complexity; the sequence is SSTETTPESSRPASSQS. A phosphoserine mark is found at Ser220, Ser221, Ser251, and Ser255.

This sequence belongs to the GARIN family. Interacts (via N-terminus) with RAB2B (in GTP-bound form).

It is found in the golgi apparatus. RAB2B effector protein required for accurate acrosome formation and normal male fertility. The polypeptide is Golgi-associated RAB2 interactor protein 1A (Garin1a) (Rattus norvegicus (Rat)).